Consider the following 691-residue polypeptide: Inactive TPR repeat-containing thioredoxin TTL3 (691 aa).

2 disordered regions span residues 1–153 and 174–209; these read MSHS…AVSP and MASR…TSGK. Phosphoserine is present on serine 8. The span at 19–39 shows a compositional bias: basic and acidic residues; sequence RFRDLQRNDDDVNKPDFRELD. A phosphoserine mark is found at serine 42 and serine 45. Positions 51 to 79 are enriched in low complexity; that stretch reads GSASSSAAATPTSSSGSSGSASGKPSVSS. Basic and acidic residues predominate over residues 83–93; it reads KRLDDAYKSHS. 3 stretches are compositionally biased toward polar residues: residues 94-108, 118-140, and 175-189; these read GELS…TTTR, SSTG…HTSP, and ASRT…CTGT. TPR repeat units lie at residues 220–253, 255–287, 289–321, 327–362, 412–445, 458–491, 492–525, and 527–559; these read PEEL…SPGN, AYRS…DPSY, RAHQ…PDQA, QTLE…GADS, AYVL…DQTN, VVRA…DDSN, SVLY…QPSY, and KALL…LPGD. A Thioredoxin domain is found at 596 to 683; it reads DKFKKSVALP…MVCPSHQFLE (88 aa).

In terms of assembly, interacts with BRL2. Expressed in embryos and organ primordia in shoot and root. In primary and cauline leaves and petals, is expressed in hydathodes, guard cells, petiole cells and cells associated with differentiating vascular bundles.

Its function is as follows. Involved in osmotic and salt stress tolerance. May play a role in the control of meristematic cell size during osmotic stress. May function as an adapter protein for BRL2 and may be required for signaling affecting leaf vascular tissue pattern formation. This is Inactive TPR repeat-containing thioredoxin TTL3 from Arabidopsis thaliana (Mouse-ear cress).